Reading from the N-terminus, the 209-residue chain is tRNA (guanine-N(7)-)-methyltransferase (209 aa).

Asp35, Glu60, Asn87, and Asp113 together coordinate S-adenosyl-L-methionine. Asp113 is an active-site residue. Residues Lys117 and Asp149 each contribute to the substrate site.

Belongs to the class I-like SAM-binding methyltransferase superfamily. TrmB family.

The enzyme catalyses guanosine(46) in tRNA + S-adenosyl-L-methionine = N(7)-methylguanosine(46) in tRNA + S-adenosyl-L-homocysteine. Its pathway is tRNA modification; N(7)-methylguanine-tRNA biosynthesis. Catalyzes the formation of N(7)-methylguanine at position 46 (m7G46) in tRNA. This is tRNA (guanine-N(7)-)-methyltransferase from Prochlorococcus marinus (strain AS9601).